The following is an 805-amino-acid chain: Leucine--tRNA ligase (805 aa).

Residues 40 to 51 (PYPSGAGLHVGH) carry the 'HIGH' region motif. A 'KMSKS' region motif is present at residues 576-580 (KMSKS). K579 is an ATP binding site.

It belongs to the class-I aminoacyl-tRNA synthetase family.

Its subcellular location is the cytoplasm. The enzyme catalyses tRNA(Leu) + L-leucine + ATP = L-leucyl-tRNA(Leu) + AMP + diphosphate. This Anoxybacillus flavithermus (strain DSM 21510 / WK1) protein is Leucine--tRNA ligase.